The primary structure comprises 140 residues: Ribosome-binding factor A (140 aa).

Over residues 118–133 the composition is skewed to basic and acidic residues; that stretch reads DEAKQQKHNGKDKTDT. The disordered stretch occupies residues 118 to 140; sequence DEAKQQKHNGKDKTDTADSEGEE.

Belongs to the RbfA family. In terms of assembly, monomer. Binds 30S ribosomal subunits, but not 50S ribosomal subunits or 70S ribosomes.

The protein resides in the cytoplasm. Its function is as follows. One of several proteins that assist in the late maturation steps of the functional core of the 30S ribosomal subunit. Associates with free 30S ribosomal subunits (but not with 30S subunits that are part of 70S ribosomes or polysomes). Required for efficient processing of 16S rRNA. May interact with the 5'-terminal helix region of 16S rRNA. The polypeptide is Ribosome-binding factor A (Shewanella woodyi (strain ATCC 51908 / MS32)).